A 426-amino-acid chain; its full sequence is UPF0329 protein ECU06_0040 (426 aa).

The span at 136–172 shows a compositional bias: basic and acidic residues; the sequence is RQRKREEETERSVKELVGDEEKAKSKEEKAKSKEEKA. Residues 136–230 form a disordered region; it reads RQRKREEETE…GGKKKSKGGR (95 aa). Residues 220–230 show a composition bias toward basic residues; it reads KGGKKKSKGGR.

The protein belongs to the UPF0329 family.

The sequence is that of UPF0329 protein ECU06_0040 from Encephalitozoon cuniculi (strain GB-M1) (Microsporidian parasite).